Here is a 297-residue protein sequence, read N- to C-terminus: Phosphatidylinositol N-acetylglucosaminyltransferase subunit C (297 aa).

4 consecutive transmembrane segments (helical) span residues 67–87, 88–108, 153–173, and 239–259; these read VFVVIWWYMDEGLLAPQWLFG, TGLASSLVGYVLFDLIDGGDG, AVFMLLGHLIFFDYGANAAIV, and AFGGLLSISAVGAILFALLLF.

The protein belongs to the PIGC family. As to quaternary structure, component of the glycosylphosphatidylinositol-N-acetylglucosaminyltransferase (GPI-GnT) complex composed at least by PIGA, PIGC, PIGH, PIGP, PIGQ, PIGY and DPM2. Interacts with PIGQ. Interacts with the heterodimer PIGA:PIGH.

The protein localises to the endoplasmic reticulum membrane. Its pathway is glycolipid biosynthesis; glycosylphosphatidylinositol-anchor biosynthesis. Its function is as follows. Part of the glycosylphosphatidylinositol-N-acetylglucosaminyltransferase (GPI-GnT) complex that catalyzes the transfer of N-acetylglucosamine from UDP-N-acetylglucosamine to phosphatidylinositol and participates in the first step of GPI biosynthesis. This chain is Phosphatidylinositol N-acetylglucosaminyltransferase subunit C, found in Mus musculus (Mouse).